The following is a 331-amino-acid chain: Carbonic anhydrase-related protein 11 (331 aa).

A signal peptide spans 1–23; that stretch reads MGGAARLSAPRALVLWAVLGAAA. In terms of domain architecture, Alpha-carbonic anhydrase spans 33-306; it reads DWWSYKDNLQ…LAHRALRGNR (274 aa). Residues asparagine 118, asparagine 170, asparagine 189, and asparagine 263 are each glycosylated (N-linked (GlcNAc...) asparagine). The segment at 303–331 is disordered; that stretch reads RGNRDPRHPERRCRGPNYRLHVDGAPHGR. The segment covering 322 to 331 has biased composition (basic and acidic residues); sequence LHVDGAPHGR.

Belongs to the alpha-carbonic anhydrase family.

Its subcellular location is the secreted. In terms of biological role, does not have a catalytic activity. The polypeptide is Carbonic anhydrase-related protein 11 (CA11) (Sus scrofa (Pig)).